We begin with the raw amino-acid sequence, 163 residues long: Seed allergenic protein RAG1 (163 aa).

The N-terminal stretch at 1–27 (MASNKVVFSVLLLVVLSVLAAAMATMA) is a signal peptide. Cystine bridges form between C39/C90, C53/C78, C61/C122, C79/C138, and C92/C150.

This sequence belongs to the cereal trypsin/alpha-amylase inhibitor family. Post-translationally, five disulfide bonds are present.

It localises to the secreted. Its function is as follows. Seed storage protein. In Oryza sativa subsp. japonica (Rice), this protein is Seed allergenic protein RAG1 (RAG1).